A 142-amino-acid chain; its full sequence is Large ribosomal subunit protein uL11 (142 aa).

Belongs to the universal ribosomal protein uL11 family. As to quaternary structure, part of the ribosomal stalk of the 50S ribosomal subunit. Interacts with L10 and the large rRNA to form the base of the stalk. L10 forms an elongated spine to which L12 dimers bind in a sequential fashion forming a multimeric L10(L12)X complex. Post-translationally, one or more lysine residues are methylated.

In terms of biological role, forms part of the ribosomal stalk which helps the ribosome interact with GTP-bound translation factors. The protein is Large ribosomal subunit protein uL11 of Parvibaculum lavamentivorans (strain DS-1 / DSM 13023 / NCIMB 13966).